The chain runs to 1165 residues: MRFIIGGAGSGKSQRCLDELTQAAQAAPAGPPLILLVPEQATFQVEQALLGSGRLKGIIRAQVLSFQRLAWRVSLKAGGLALPPLSDLGKQMVLRALLEKKRDDLRLFHQVADKPGFIERVAGSIRELRSYRQGPESLRRQLSQLEAEGLGETSLGAKLHDLALVMDELRSYIEGRFTDPDEYLTVLAARLEESRLLEGAEVWVDGFNGFTPQELAVLGAVMRSARQVHISLCIPPGQLYKAGGHHSPSDLFHPVLSTYDQLMQLAAESGVAVDPPLYLNEPLRFRGAPELAHVERYLFRQSAPAWPGAPERIALVEAQNRREEVAAAAREILRLVREEGLRFREIAVVARDLEGYGDLAATLFAEHGIPAFIDRRRTVAHHPLVELLRAALEVVVQDWAYGPVFRYLKTDLTGVSRAEIDLLENYVIEHGIRGRAWQQQEPWQYLRRYTLEEDAVPAGPAQQALLDEIHRIRRRATAPLLAFQRRLQRRGRPGPTVREITTYLFQLLDDLKVARQLEAWKAEAEQRGDLETAREHEQVWTRVLELFDQIVEGLGDQVLSPKVYLQVLSAGLDGLKLGLIPPGLDQVIVGTVERSRHAGVRATLILGATEKDFPPQPAEDAIFTDRERERLKQSGLDVGPTSLERLFQEQFLTYVALTRGSDFLWISYPLADESGRAAAPSPVVGRMRRLFPELKPRPAAPPAPDAEAAVAQVATPRQLAAAVARALRRARSGYAVEPHWLDLYQCIVLDPDLHREGAAVLAAVGYEEWLRRRGTPVGRELARLLYGDRLVTSVSRLEAFLSCPFRHFAGYALRLQGRAEFTVSAPEFGLFYHAALSLFVRELERDGLAWDTLTPDEAWRRMDSIIDRLAPRLQSEILLSSPQHRYLLRVIRRTLQSSLDYLSEHVLHGEFRPVAVEVPFGEEMDGLPPVEVDLPGGGRVLLRGRIDRVDALEGRDGRWYVRVIDYKSGRRDLRLGDFYHGLTLQLLLYLMAVVEGGEPLLPGTRVPAGALYLPVYDPVEPVNAPVPPDEVRPLRRKRYQARGLVSDDPAVIQAMDAAGLGLIQAKLKKDGTVYKGAPVASPDQFRQLFAHLRRVVRACGEQILQGEAAIAPYRLGPHTACQYCAYRPVCQFDPAVEPQGYRRLEKMDAPDVWQRVAAAGGEGDV.

Residues 1–324 (MRFIIGGAGS…LVEAQNRREE (324 aa)) enclose the UvrD-like helicase ATP-binding domain. Residue 6–13 (GGAGSGKS) coordinates ATP. The region spanning 282–597 (PLRFRGAPEL…IVGTVERSRH (316 aa)) is the UvrD-like helicase C-terminal domain. 4 residues coordinate [4Fe-4S] cluster: C803, C1121, C1124, and C1130.

This sequence belongs to the helicase family. AddB/RexB type 1 subfamily. As to quaternary structure, heterodimer of AddA and AddB. The cofactor is Mg(2+). [4Fe-4S] cluster is required as a cofactor.

In terms of biological role, the heterodimer acts as both an ATP-dependent DNA helicase and an ATP-dependent, dual-direction single-stranded exonuclease. Recognizes the chi site generating a DNA molecule suitable for the initiation of homologous recombination. The AddB subunit has 5' -&gt; 3' nuclease activity but not helicase activity. This is ATP-dependent helicase/deoxyribonuclease subunit B from Symbiobacterium thermophilum (strain DSM 24528 / JCM 14929 / IAM 14863 / T).